We begin with the raw amino-acid sequence, 436 residues long: Tubulin epsilon and delta complex protein 2 (436 aa).

Disordered regions lie at residues 53 to 76 and 94 to 191; these read ARTP…PSSQ and VRKG…PSSA. Over residues 111–131 the composition is skewed to low complexity; that stretch reads TSKAATSGAAAASHPRAPSRG. The span at 153–170 shows a compositional bias: basic and acidic residues; the sequence is DYPEHRLRSKGDKTHVRT. A Phosphoserine modification is found at S161.

In terms of assembly, interacts with TEDC1. Found in a complex with TEDC1, TEDC2, TUBE1 and TUBD1.

It is found in the cell projection. The protein localises to the cilium. It localises to the cytoplasm. Its subcellular location is the cytoskeleton. The protein resides in the microtubule organizing center. It is found in the centrosome. The protein localises to the centriole. Functionally, acts as a positive regulator of ciliary hedgehog signaling. Required for centriole stability. The sequence is that of Tubulin epsilon and delta complex protein 2 from Mus musculus (Mouse).